A 443-amino-acid polypeptide reads, in one-letter code: Protein IQ-DOMAIN 11 (443 aa).

Residues 5–20 (KGLFTVLKRIFISEVN) form a calmodulin-binding region. 2 short sequence motifs (nuclear localization signal) span residues 11 to 18 (LKRIFISE) and 27 to 34 (RRKWTFWK). Residues 44 to 65 (ITAPPEHRTSHESHEEQKEEIV) are disordered. Basic and acidic residues predominate over residues 48–64 (PEHRTSHESHEEQKEEI). IQ domains follow at residues 113–138 (AATR…GIVK) and 139–161 (LQAY…CLQS). A compositionally biased stretch (basic and acidic residues) spans 277–293 (FSSKTKPKDETLNEKQL). Residues 277–361 (FSSKTKPKDE…PRSFDTQSES (85 aa)) are disordered.

The protein belongs to the IQD family. As to quaternary structure, binds to multiple calmodulin (CaM) in the presence of Ca(2+) and CaM-like proteins. As to expression, expressed in hypocotyls, cotyledons, leaves and petioles.

Its subcellular location is the nucleus. The protein resides in the cytoplasm. It is found in the cytoskeleton. Its function is as follows. May be involved in cooperative interactions with calmodulins or calmodulin-like proteins. Recruits calmodulin proteins to microtubules, thus being a potential scaffold in cellular signaling and trafficking. Regulates cell shape and elongation in aerial organs (i.e. epidermis pavement cells) probably by regulating cortical microtubules (MT) arrays orientation. May associate with nucleic acids and regulate gene expression at the transcriptional or post-transcriptional level. The polypeptide is Protein IQ-DOMAIN 11 (Arabidopsis thaliana (Mouse-ear cress)).